The sequence spans 448 residues: Beclin-1 (448 aa).

N-acetylmethionine is present on M1. A phosphoserine mark is found at S14 and S29. The disordered stretch occupies residues 47 to 66; it reads TTAQAKPGETQEEEANSGEE. 3 positions are modified to phosphoserine; by AMPK: S88, S91, and S94. A BH3 motif is present at residues 106–125; the sequence is TMENLSRRLKVTGDLFDIMS. The interaction with BCL2 and BCL2L1 isoform Bcl-X(L) stretch occupies residues 110–157; it reads LSRRLKVTGDLFDIMSGQTDVDHPLCEECTDTLLDQLDTQLNVTENEC. Residue T117 is modified to Phosphothreonine; by DAPK1. The stretch at 140 to 268 forms a coiled coil; it reads DTLLDQLDTQ…LDKLKKTNVF (129 aa). An evolutionary conserved domain (ECD) region spans residues 243–448; that stretch reads DELKSVENQV…AWVSSQFYNK (206 aa). Residues K400 and K435 each participate in a glycyl lysine isopeptide (Lys-Gly) (interchain with G-Cter in ubiquitin) cross-link. Residues 423–448 are required for membrane-association; the sequence is WTKALKFMLTNLKWGLAWVSSQFYNK.

The protein belongs to the beclin family. In terms of assembly, a homodimeric form is proposed to exist; this metastable form readily transits to ATG14- or UVRAG-containing complexes with BECN1:UVRAG being more stable than BECN1:ATG14. Component of the PI3K (PI3KC3/PI3K-III/class III phosphatidylinositol 3-kinase) complex whose core is composed of the catalytic subunit PIK3C3, the regulatory subunit PIK3R4 and BECN1, and associates with additional regulatory/auxiliary subunits to form alternative complex forms. Accepted alternative complex forms containing a fourth regulatory subunit in a mutually exclusive manner are PI3K complex I (PI3KC3-C1) containing ATG14, and PI3K complex II (PI3KC3-C2) containing UVRAG. PI3KC3-C1 displays a V-shaped architecture with PIK3R4 serving as a bridge between PIK3C3 and the ATG14:BECN1 subcomplex. Both, PI3KC3-C1 and PI3KC3-C2, can associate with further regulatory subunits, such as RUBCN, SH3GLB1/Bif-1 and AMBRA1. PI3KC3-C1 probably associates with PIK3CB. Forms a complex with PPP2CA and AMBRA1; AMBRA1 and BECN1 components of the complex regulate MYC stability via different pathways. Component of the complex, at least composed of LRPPRC, BECN1 and BCL2; the interactions prevent BECN1 from forming an autophagy-inducing complex with PIK3C3. Interacts with AMBRA1, GOPC, GRID2 and PIK3CB. Interacts with BCL2 and BCL2L1 isoform Bcl-X(L); the interaction inhibits BECN1 function in promoting autophagy by interfering with the formation of the PI3K complex. Interacts with cytosolic HMGB1; inhibits the interaction of BECN1 and BCL2 leading to promotion of autophagy. Interacts with USP10, USP13, VMP1, DAPK1. Interacts with the poly-Gln domain of ATXN3; the interaction causes deubiquitination at Lys-400 and stabilizes BECN1. Interacts with SLAMF1. Interacts with TRIM5; the interaction causes activation of BECN1 by causing its dissociation from its inhibitors BCL2 and TAB2. Interacts with active ULK1 (phosphorylated on 'Ser-317') and MEFV simultaneously. Interacts with TRIM50. Interacts with TRIM16. Interacts with WDR81 and WDR91; negatively regulates the PI3 kinase/PI3K activity associated with endosomal membranes. Interacts with LAPTM4B; competes with EGFR for LAPTM4B binding; regulates EGFR activity. Interacts with ATG14; this interaction is increased in the absence of TMEM39A. Interacts with WASHC1; preventing interaction with AMBRA1 and the DCX(AMBRA1) complex and subsequent ubiquitination. Interacts with TRIM17. Interacts with BCL2L10/BCL-B (via BH1 domain). Interacts with SH3BGRL. Interacts with Irgm1; enhancing BECN1-interacting partners and influencing the composition of the BECN1 complex. Interacts with ARMC3. Interacts with LRPPRC. As to quaternary structure, (Microbial infection) Interacts with murine gammaherpesvirus 68 M11; the viral protein binds BECN1 with higher affinity than cellular BCL2. Post-translationally, phosphorylation at Thr-117 by DAPK1 reduces its interaction with BCL2 and BCL2L1 and promotes induction of autophagy. In response to autophagic stimuli, phosphorylated at serine residues by AMPK in an ATG14-dependent manner, and this phosphorylation is critical for maximally efficient autophagy. In terms of processing, polyubiquitinated by NEDD4, both with 'Lys-11'- and 'Lys-63'-linkages. 'Lys-11'-linked polyubiquitination leads to degradation and is enhanced when the stabilizing interaction partner VPS34 is depleted. Deubiquitinated by USP10 and USP13, leading to stabilize the PIK3C3/VPS34-containing complexes. Polyubiquitinated at Lys-400 with 'Lys-48'-linkages. 'Lys-48'-linked poyubiquitination of Lys-400 leads to degradation. Deubiquitinated by ATXN3, leading to stabilization. Ubiquitinated at Lys-435 via 'Lys-63'-linkage by the DCX(AMBRA1) complex, thereby increasing the association between BECN1 and PIK3C3 to promote PIK3C3 activity. 'Lys-48'-linked ubiquitination by RNF216 leads to proteasomal degradation and autophagy inhibition. Proteolytically processed by caspases including CASP8 and CASP3; the C-terminal fragments lack autophagy-inducing capacity and are proposed to induce apoptosis. Thus the cleavage is proposed to be an determinant to switch from autophagy to apoptosis pathways affecting cellular homeostasis including viral infections and survival of tumor cells.

It is found in the cytoplasm. The protein resides in the golgi apparatus. Its subcellular location is the trans-Golgi network membrane. The protein localises to the endosome membrane. It localises to the endoplasmic reticulum membrane. It is found in the mitochondrion membrane. The protein resides in the endosome. Its subcellular location is the cytoplasmic vesicle. The protein localises to the autophagosome. It localises to the mitochondrion. It is found in the nucleus. Functionally, plays a central role in autophagy. Acts as a core subunit of different PI3K complex forms that mediate formation of phosphatidylinositol 3-phosphate and are believed to play a role in multiple membrane trafficking pathways: PI3KC3-C1 is involved in initiation of autophagosomes and PI3KC3-C2 in maturation of autophagosomes and endocytosis. Involved in regulation of degradative endocytic trafficking and required for the abscission step in cytokinesis, probably in the context of PI3KC3-C2. Essential for the formation of PI3KC3-C2 but not PI3KC3-C1 PI3K complex forms. Involved in endocytosis including endosome formation in neuronal cells. May play a role in antiviral host defense. In terms of biological role, beclin-1-C 35 kDa localized to mitochondria can promote apoptosis; it induces the mitochondrial translocation of BAX and the release of proapoptotic factors. The polypeptide is Beclin-1 (Becn1) (Mus musculus (Mouse)).